The chain runs to 75 residues: Supwaprin-a (75 aa).

Residues 1 to 24 form the signal peptide; it reads MSSGGLLLLLGFLTLWAELTPVSG. One can recognise a WAP domain in the interval 27–72; that stretch reads RPKKPGLCPPRPQKPPCVRECKNDWSCPGEQKCCRYGCIFECRDPI. 4 cysteine pairs are disulfide-bonded: Cys34/Cys60, Cys43/Cys64, Cys47/Cys59, and Cys53/Cys68.

The protein belongs to the venom waprin family. Expressed by the venom gland.

The protein localises to the secreted. In terms of biological role, damages membranes of susceptible bacteria. Has no hemolytic activity. Not toxic to mice. Does not inhibit the proteinases elastase and cathepsin G. The polypeptide is Supwaprin-a (Austrelaps superbus (Lowland copperhead snake)).